The chain runs to 127 residues: Large ribosomal subunit protein bL17 (127 aa).

This sequence belongs to the bacterial ribosomal protein bL17 family. In terms of assembly, part of the 50S ribosomal subunit. Contacts protein L32.

The chain is Large ribosomal subunit protein bL17 from Mannheimia succiniciproducens (strain KCTC 0769BP / MBEL55E).